The primary structure comprises 782 residues: HHIP-like protein 1 (782 aa).

The first 19 residues, 1–19, serve as a signal peptide directing secretion; the sequence is MARARAGALLALWVLGAAA. Disulfide bonds link C181-C521, C185-C528, C399-C417, and C484-C584. Residue N234 is glycosylated (N-linked (GlcNAc...) asparagine). The interval 604–666 is disordered; that stretch reads EKFIPKTRST…RRGRLNSASR (63 aa). Low complexity predominate over residues 610–623; the sequence is TRSTPRPTARAPTR. Residues 632–642 are compositionally biased toward pro residues; that stretch reads AAPPAPTPRPA. Residues 673 to 776 form the SRCR domain; sequence VRLVRPAGLS…HDEDAGVVCS (104 aa). 3 disulfide bridges follow: C700–C765, C713–C775, and C745–C755.

It belongs to the HHIP family.

The protein localises to the secreted. The chain is HHIP-like protein 1 (HHIPL1) from Homo sapiens (Human).